Here is a 1136-residue protein sequence, read N- to C-terminus: Probable phospholipid-transporting ATPase IIB (1136 aa).

The Cytoplasmic portion of the chain corresponds to 1–145 (MADQIPLYPV…IKNQKYNIFT (145 aa)). A helical membrane pass occupies residues 146–166 (FIPGVLYEQFKFFLNLYFLIV). Residues 167–174 (SCSQFVPA) are Extracellular-facing. The helical transmembrane segment at 175–195 (LKIGYLYTYWAPLGFVLAVTI) threads the bilayer. The Cytoplasmic segment spans residues 196–383 (MREAVDEFRR…LDLELNQLTK (188 aa)). A helical transmembrane segment spans residues 384-404 (ALFLALVALSVVMVTLQGFAG). Over 405–408 (PWYR) the chain is Extracellular. A helical membrane pass occupies residues 409 to 429 (SLFRFLLLFSYIIPISLRVNL). Residues 430–939 (DMGKAAYGWM…ALGQFVMHRG (510 aa)) lie on the Cytoplasmic side of the membrane. D469 functions as the 4-aspartylphosphate intermediate in the catalytic mechanism. Positions 469, 470, and 471 each coordinate ATP. D469 lines the Mg(2+) pocket. T471 is a binding site for Mg(2+). The interval 514-538 (AGGSSAASTPPRKAPSSAPKVRRSV) is disordered. Residues E591, F633, K638, K657, R686, T687, T766, G767, D768, R848, and K854 each coordinate ATP. Residue D874 coordinates Mg(2+). ATP contacts are provided by N877 and D878. Position 878 (D878) interacts with Mg(2+). A helical transmembrane segment spans residues 940-960 (LIISTMQAVFSSVFYFASVPL). The Extracellular segment spans residues 961-962 (YQ). Residues 963 to 983 (GFLMVGYATVYTMFPVFSLVL) traverse the membrane as a helical segment. At 984 to 1012 (DQDVKPEMAMLYPELYKDLTKGRSLSFKT) the chain is on the cytoplasmic side. Residues 1013-1033 (FLVWVLISIYQGGILMFGALV) traverse the membrane as a helical segment. The Extracellular portion of the chain corresponds to 1034-1041 (LFESEFVH). A helical membrane pass occupies residues 1042–1062 (VVAISFTALVLTELLMVALTV). At 1063–1066 (RTWH) the chain is on the cytoplasmic side. The chain crosses the membrane as a helical span at residues 1067 to 1087 (WLMVVAQLLSLGCYVASLAFL). Residues 1088 to 1098 (NEYFDVAFITT) are Extracellular-facing. The chain crosses the membrane as a helical span at residues 1099–1119 (VTFVWKVSAITVVSCLPLYVL). Topologically, residues 1120 to 1136 (KYLKRKLSPPSYSKLSS) are cytoplasmic.

The protein belongs to the cation transport ATPase (P-type) (TC 3.A.3) family. Type IV subfamily. It depends on Mg(2+) as a cofactor.

It is found in the golgi apparatus. Its subcellular location is the trans-Golgi network membrane. The enzyme catalyses ATP + H2O + phospholipidSide 1 = ADP + phosphate + phospholipidSide 2.. The chain is Probable phospholipid-transporting ATPase IIB (ATP9B) from Bos taurus (Bovine).